Here is a 236-residue protein sequence, read N- to C-terminus: Small ribosomal subunit protein uS2c (236 aa).

This sequence belongs to the universal ribosomal protein uS2 family.

Its subcellular location is the plastid. The protein localises to the chloroplast. In Chloranthus spicatus (Chulantree), this protein is Small ribosomal subunit protein uS2c (rps2).